The following is a 694-amino-acid chain: Glycine--tRNA ligase beta subunit (694 aa).

Belongs to the class-II aminoacyl-tRNA synthetase family. In terms of assembly, tetramer of two alpha and two beta subunits.

It localises to the cytoplasm. It catalyses the reaction tRNA(Gly) + glycine + ATP = glycyl-tRNA(Gly) + AMP + diphosphate. In Lactiplantibacillus plantarum (strain ATCC BAA-793 / NCIMB 8826 / WCFS1) (Lactobacillus plantarum), this protein is Glycine--tRNA ligase beta subunit.